A 512-amino-acid chain; its full sequence is Probable metalloreductase AIM14 (512 aa).

7 helical membrane-spanning segments follow: residues 20 to 40 (IKYGYIVLGFSVVHIIGILIC), 61 to 81 (PLFISIIAWTLILIGLGVFHV), 97 to 117 (MSYALLPFDIFLVLRPNSIGL), 132 to 152 (VIIAGAIIHGVGYFIKWILEG), 161 to 181 (LWNFLGIVVFMLNLILIIISL), 191 to 211 (YFYVVHNITVWLFVGLICLHA), and 218 to 235 (YAIACASLLGLQIFERYA). In terms of domain architecture, Ferric oxidoreductase spans 94–206 (FGRMSYALLP…NITVWLFVGL (113 aa)). Residues 230-355 (IFERYAKSHS…GGSGISFALP (126 aa)) form the FAD-binding FR-type domain. Positions 427–436 (ESLPSSETPS) are enriched in low complexity. Residues 427–451 (ESLPSSETPSRTVNDDSLSQDTRPK) form a disordered region. Residues 437 to 447 (RTVNDDSLSQD) show a composition bias toward polar residues.

The protein belongs to the ferric reductase (FRE) family. AIM14 subfamily.

It is found in the membrane. Probable cell surface metalloreductase. May be involved in iron or copper homeostasis. This is Probable metalloreductase AIM14 (AIM14) from Debaryomyces hansenii (strain ATCC 36239 / CBS 767 / BCRC 21394 / JCM 1990 / NBRC 0083 / IGC 2968) (Yeast).